The sequence spans 1741 residues: Meiosis regulator and mRNA stability factor 1 (1741 aa).

Residues 345–482 form the NYN domain; it reads IGVFWDIENC…ALLHHAHELV (138 aa). Disordered stretches follow at residues 594–636, 659–678, and 683–716; these read KVKS…GSVI, TENH…SHAA, and LTTK…PVDK. Positions 659 to 668 are enriched in basic and acidic residues; the sequence is TENHQEHLRE. In terms of domain architecture, RRM spans 788-867; the sequence is ADIQISNIDY…KRIQVSLATG (80 aa). HTH OST-type domains lie at 872-946, 1000-1076, 1097-1171, 1173-1248, 1257-1332, 1333-1408, 1409-1483, and 1484-1558; these read SLSL…SPLG, SLKT…HNKP, QLIQ…LTHR, QVKR…IPKR, RTKQ…TEVE, QVKA…INRK, SLRT…VRLT, and NLYM…LKND. The span at 1684-1700 shows a compositional bias: polar residues; sequence KLTSGSVASSTAENTSV. Residues 1684–1727 form a disordered region; that stretch reads KLTSGSVASSTAENTSVPPRHSSETQLNKEAMDSPAKKQHKNKV.

Its subcellular location is the peroxisome. Functionally, essential regulator of oogenesis required for female meiotic progression to repress transposable elements and preventing their mobilization, which is essential for the germline integrity. This is Meiosis regulator and mRNA stability factor 1 from Gallus gallus (Chicken).